We begin with the raw amino-acid sequence, 249 residues long: 5'-nucleotidase SurE (249 aa).

4 residues coordinate a divalent metal cation: Asp8, Asp9, Ser39, and Asn91.

It belongs to the SurE nucleotidase family. A divalent metal cation serves as cofactor.

The protein localises to the cytoplasm. It catalyses the reaction a ribonucleoside 5'-phosphate + H2O = a ribonucleoside + phosphate. In terms of biological role, nucleotidase that shows phosphatase activity on nucleoside 5'-monophosphates. This is 5'-nucleotidase SurE from Azotobacter vinelandii (strain DJ / ATCC BAA-1303).